Consider the following 914-residue polypeptide: Golgin candidate 6 (914 aa).

Coiled coils occupy residues 723 to 837 (IEKQ…SLKG) and 863 to 901 (EDEL…LEDI). Position 911 is a phosphoserine (serine 911).

Its subcellular location is the golgi apparatus. The protein resides in the golgi stack. In terms of biological role, golgi matrix protein playing a role in tethering of vesicles to Golgi membranes and in maintaining the overall structure of the Golgi apparatus. Functions in the anterograde transport of storage protein precursors from the endoplasmic reticulum (ER) to the Golgi complex. This is Golgin candidate 6 (GC6) from Arabidopsis thaliana (Mouse-ear cress).